The primary structure comprises 173 residues: Probable DNA-directed RNA polymerase subunit delta (173 aa).

Residues 14 to 81 (LSMIELGVKI…GSGMWGLKRW (68 aa)) form the HTH HARE-type domain. The disordered stretch occupies residues 86-173 (QAEEEITEEP…EDENDDDNTR (88 aa)). The span at 109–173 (IDDVDDDLDV…EDENDDDNTR (65 aa)) shows a compositional bias: acidic residues.

The protein belongs to the RpoE family. In terms of assembly, RNAP is composed of a core of 2 alpha, a beta and a beta' subunits. The core is associated with a delta subunit and one of several sigma factors.

Functionally, participates in both the initiation and recycling phases of transcription. In the presence of the delta subunit, RNAP displays an increased specificity of transcription, a decreased affinity for nucleic acids, and an increased efficiency of RNA synthesis because of enhanced recycling. In Oceanobacillus iheyensis (strain DSM 14371 / CIP 107618 / JCM 11309 / KCTC 3954 / HTE831), this protein is Probable DNA-directed RNA polymerase subunit delta.